Here is a 355-residue protein sequence, read N- to C-terminus: Adenine deaminase (355 aa).

Zn(2+) is bound by residues H24, H26, and H204. Residue E207 is the Proton donor of the active site. D285 contributes to the Zn(2+) binding site. D286 lines the substrate pocket.

The protein belongs to the metallo-dependent hydrolases superfamily. Adenosine and AMP deaminases family. Adenine deaminase type 2 subfamily. Requires Zn(2+) as cofactor.

The catalysed reaction is adenine + H2O + H(+) = hypoxanthine + NH4(+). In terms of biological role, catalyzes the hydrolytic deamination of adenine to hypoxanthine. Plays an important role in the purine salvage pathway and in nitrogen catabolism. The chain is Adenine deaminase from Geotalea uraniireducens (strain Rf4) (Geobacter uraniireducens).